The sequence spans 211 residues: Uridine kinase (211 aa).

ATP is bound at residue 12–19 (GGSGSGKT).

The protein belongs to the uridine kinase family.

It is found in the cytoplasm. It carries out the reaction uridine + ATP = UMP + ADP + H(+). The enzyme catalyses cytidine + ATP = CMP + ADP + H(+). It participates in pyrimidine metabolism; CTP biosynthesis via salvage pathway; CTP from cytidine: step 1/3. The protein operates within pyrimidine metabolism; UMP biosynthesis via salvage pathway; UMP from uridine: step 1/1. The chain is Uridine kinase from Geobacillus sp. (strain WCH70).